Reading from the N-terminus, the 150-residue chain is Phosphopantetheine adenylyltransferase (150 aa).

Residue T9 participates in substrate binding. ATP-binding positions include 9–10 and H17; that span reads TF. Positions 41, 73, and 87 each coordinate substrate. ATP-binding positions include 88-90, E98, and 122-128; these read GIR and LTCVSST.

It belongs to the bacterial CoaD family. As to quaternary structure, homohexamer. Mg(2+) serves as cofactor.

The protein localises to the cytoplasm. The catalysed reaction is (R)-4'-phosphopantetheine + ATP + H(+) = 3'-dephospho-CoA + diphosphate. It functions in the pathway cofactor biosynthesis; coenzyme A biosynthesis; CoA from (R)-pantothenate: step 4/5. Reversibly transfers an adenylyl group from ATP to 4'-phosphopantetheine, yielding dephospho-CoA (dPCoA) and pyrophosphate. The polypeptide is Phosphopantetheine adenylyltransferase (Bacteroides fragilis (strain ATCC 25285 / DSM 2151 / CCUG 4856 / JCM 11019 / LMG 10263 / NCTC 9343 / Onslow / VPI 2553 / EN-2)).